The following is a 128-amino-acid chain: Fluoride-specific ion channel FluC (128 aa).

The next 4 helical transmembrane spans lie at 1 to 21 (MPER…GATA), 45 to 65 (LAGC…SLVS), 70 to 90 (LLLA…MYEI), and 99 to 119 (IFYS…CLYF). Na(+)-binding residues include Gly78 and Thr81.

This sequence belongs to the fluoride channel Fluc/FEX (TC 1.A.43) family.

It localises to the cell inner membrane. The enzyme catalyses fluoride(in) = fluoride(out). With respect to regulation, na(+) is not transported, but it plays an essential structural role and its presence is essential for fluoride channel function. Its function is as follows. Fluoride-specific ion channel. Important for reducing fluoride concentration in the cell, thus reducing its toxicity. This chain is Fluoride-specific ion channel FluC, found in Chlorobium phaeobacteroides (strain BS1).